A 79-amino-acid chain; its full sequence is Ornithine decarboxylase (79 aa).

Pyridoxal 5'-phosphate-binding positions include Ser-8, Gly-45, and 75-78 (EPGR).

This sequence belongs to the Orn/Lys/Arg decarboxylase class-II family. Homodimer. Only the dimer is catalytically active, as the active sites are constructed of residues from both monomers. Pyridoxal 5'-phosphate is required as a cofactor.

It is found in the cytoplasm. The enzyme catalyses L-ornithine + H(+) = putrescine + CO2. It participates in amine and polyamine biosynthesis; putrescine biosynthesis via L-ornithine pathway; putrescine from L-ornithine: step 1/1. With respect to regulation, inhibited by antizyme (AZ) OAZ1 in response to polyamine levels. AZ inhibits the assembly of the functional homodimer by binding to ODC monomers and targeting them for ubiquitin-independent proteolytic destruction by the 26S proteasome. Its function is as follows. Catalyzes the first and rate-limiting step of polyamine biosynthesis that converts ornithine into putrescine, which is the precursor for the polyamines, spermidine and spermine. Polyamines are essential for cell proliferation and are implicated in cellular processes, ranging from DNA replication to apoptosis. The sequence is that of Ornithine decarboxylase (ODC) from Paracoccidioides brasiliensis.